A 64-amino-acid polypeptide reads, in one-letter code: Large ribosomal subunit protein bL35 (64 aa).

The protein belongs to the bacterial ribosomal protein bL35 family.

This Amoebophilus asiaticus (strain 5a2) protein is Large ribosomal subunit protein bL35.